The chain runs to 164 residues: B-phycoerythrin alpha chain (164 aa).

Residues Cys82 and Cys139 each contribute to the (2R,3E)-phycoerythrobilin site.

The protein belongs to the phycobiliprotein family. In terms of assembly, heteromer of 6 alpha, 6 beta and one gamma chain. Contains two covalently linked bilin chromophores.

The protein localises to the plastid. Its subcellular location is the chloroplast thylakoid membrane. Functionally, light-harvesting photosynthetic bile pigment-protein from the phycobiliprotein complex. The polypeptide is B-phycoerythrin alpha chain (cpeA) (Rhodella violacea (Red alga)).